Consider the following 480-residue polypeptide: Probable G-protein coupled receptor Mth-like 6 (480 aa).

An N-terminal signal peptide occupies residues Met1–Ala20. The Extracellular portion of the chain corresponds to Val21 to Met202. Cystine bridges form between Cys25–Cys78, Cys80–Cys85, Cys89–Cys179, and Cys90–Cys101. Asn40 carries N-linked (GlcNAc...) asparagine glycosylation. 2 N-linked (GlcNAc...) asparagine glycosylation sites follow: Asn160 and Asn170. The helical transmembrane segment at Pro203–Tyr225 threads the bilayer. At Ile226 to Asn231 the chain is on the cytoplasmic side. A helical transmembrane segment spans residues Leu232–Gly254. Residues Asp255–Cys263 lie on the Extracellular side of the membrane. A helical membrane pass occupies residues Ser264–Val283. Topologically, residues Met284–His303 are cytoplasmic. The helical transmembrane segment at Phe304–Asp326 threads the bilayer. The Extracellular segment spans residues Trp327–Ala356. A helical membrane pass occupies residues Met357–Val379. Over Asn380–Phe405 the chain is Cytoplasmic. Residues Leu406–Val428 form a helical membrane-spanning segment. At Lys429–Val437 the chain is on the extracellular side. Residues Leu438 to Ile457 form a helical membrane-spanning segment. The Cytoplasmic segment spans residues Leu458 to Ser480.

Belongs to the G-protein coupled receptor 2 family. Mth subfamily.

It localises to the cell membrane. The chain is Probable G-protein coupled receptor Mth-like 6 (mthl6) from Drosophila melanogaster (Fruit fly).